Reading from the N-terminus, the 159-residue chain is MKSIFLVFFAVCLVKAEAGKGRKREPNIINPPCRECYVQDSSGNCVYDKWGCGGARKREPNIINPPCRECYVQDSSGNCVYDKWGCGGARKREPNIINPPCRECYVQDSSGNCVYDKWGCGGARKREPNIINPPCRECYVQDSSGNCVYDKWGCGGARK.

A signal peptide spans 1 to 18 (MKSIFLVFFAVCLVKAEA). The propeptide occupies 19 to 26 (GKGRKREP). Disulfide bonds link Cys-33–Cys-45 and Cys-36–Cys-52. A propeptide spanning residues 59-60 (EP) is cleaved from the precursor. Disulfide bonds link Cys-67–Cys-79 and Cys-70–Cys-86. The propeptide occupies 93-94 (EP). Intrachain disulfides connect Cys-101–Cys-113 and Cys-104–Cys-120. Residues 127–128 (EP) constitute a propeptide that is removed on maturation. 2 disulfides stabilise this stretch: Cys-135-Cys-147 and Cys-138-Cys-154.

Belongs to the sea anemone BBH family.

The protein resides in the secreted. It is found in the nematocyst. Its function is as follows. Inhibits ion channels. The sequence is that of U-actitoxin-Avd13b from Anemonia viridis (Snakelocks anemone).